The chain runs to 181 residues: MGGFFSSIFSSLFGTREMRILILGLDGAGKTTILYRLQVGEVVTTIPTIGFNVETVTYKNLKFQVWDLGGQTSIRPYWRCYYSNTDAVIYVVDSCDRDRIGISKSELVAMLEEEELRKAILVVFANKQDMEQAMTSSEMANSLGLPALKDRKWQIFKTSATKGTGLDEAMEWLVETLKSRQ.

Gly-2 carries the N-myristoyl glycine lipid modification. GTP-binding positions include Gly-24 to Thr-31, Thr-45 to Thr-48, Gly-70, Asn-126 to Asp-129, and Ala-160 to Thr-161. The Mg(2+) site is built by Thr-31 and Thr-48.

Belongs to the small GTPase superfamily. Arf family. The GTP-bound form interacts with GOLGA1. The GTP-bound form interacts with GOLGA4 and RGPD8. The GTP-bound form directly interacts with ARFIP2. Binds to SCOC, preferentially in its GTP-bound form. May interact with UNC119. Interacts with ARFIP1; this interaction directs ARFIP1 to the trans-Golgi membranes. Interacts with ARFGEF1 (via N-terminus). As to expression, detected in heart, liver, lung and liver (at protein level). Detected in fetal heart, lung, liver and kidney. Detected in adult heart, placenta, lung, liver, skeletal muscle, kidney and pancreas.

Its subcellular location is the golgi apparatus membrane. The protein resides in the golgi apparatus. It localises to the trans-Golgi network membrane. It is found in the membrane. GTP-binding protein that recruits several effectors, such as golgins, arfaptins and Arf-GEFs to the trans-Golgi network, and modulates their functions at the Golgi complex. Plays thereby a role in a wide range of fundamental cellular processes, including cell polarity, innate immunity, or protein secretion mediated by arfaptins, which were shown to play a role in maintaining insulin secretion from pancreatic beta cells. The sequence is that of ADP-ribosylation factor-like protein 1 (ARL1) from Homo sapiens (Human).